Consider the following 252-residue polypeptide: Tabinhibitin 9 (252 aa).

Positions 1–23 (MTSNLYYVLISPYSLAYMVQYRS) are cleaved as a signal peptide. The short motif at 32-34 (RGD) is the Cell attachment site element. The SCP domain occupies 63 to 207 (YIRSTMCEIM…KARAFFTCNF (145 aa)).

It belongs to the CRISP family. As to expression, expressed in salivary glands.

It localises to the secreted. Its function is as follows. Inhibits platelet aggregation induced by all agonists tested (ADP, arachidonic acid, the thromboxane A2 analog U46619, thrombin, and snake venom snaclecs (TMVA that activates platelet through GPIB, and stejnulxin that specifically acts through GPVI (GP6))). May act by competing with fibrinogen for binding to glycoprotein IIb/IIIa (ITGA2B/ITGB3). This chain is Tabinhibitin 9, found in Tabanus yao (Horsefly).